Consider the following 492-residue polypeptide: N-succinylglutamate 5-semialdehyde dehydrogenase (492 aa).

220 to 225 is a binding site for NAD(+); that stretch reads GSASTG. Residues Glu-243 and Cys-277 contribute to the active site.

The protein belongs to the aldehyde dehydrogenase family. AstD subfamily.

The enzyme catalyses N-succinyl-L-glutamate 5-semialdehyde + NAD(+) + H2O = N-succinyl-L-glutamate + NADH + 2 H(+). It functions in the pathway amino-acid degradation; L-arginine degradation via AST pathway; L-glutamate and succinate from L-arginine: step 4/5. In terms of biological role, catalyzes the NAD-dependent reduction of succinylglutamate semialdehyde into succinylglutamate. This Salmonella heidelberg (strain SL476) protein is N-succinylglutamate 5-semialdehyde dehydrogenase.